Consider the following 280-residue polypeptide: Small ribosomal subunit protein uS3 (280 aa).

The 69-residue stretch at I38 to R106 folds into the KH type-2 domain. The tract at residues A215–S280 is disordered. A compositionally biased stretch (low complexity) spans S238–S280.

It belongs to the universal ribosomal protein uS3 family. In terms of assembly, part of the 30S ribosomal subunit. Forms a tight complex with proteins S10 and S14.

In terms of biological role, binds the lower part of the 30S subunit head. Binds mRNA in the 70S ribosome, positioning it for translation. This Mycolicibacterium paratuberculosis (strain ATCC BAA-968 / K-10) (Mycobacterium paratuberculosis) protein is Small ribosomal subunit protein uS3.